The chain runs to 301 residues: Glutathione transport system permease protein GsiD (301 aa).

The next 6 helical transmembrane spans lie at 37–57, 103–123, 141–161, 162–182, 220–240, and 264–284; these read VAVA…WAQY, LAAG…LGLL, VLFA…MGSG, MANV…RLVR, IVVF…SLSF, and VIAP…VLAF. In terms of domain architecture, ABC transmembrane type-1 spans 99–288; the sequence is TRISLAAGIF…LTVLAFNLLG (190 aa).

This sequence belongs to the binding-protein-dependent transport system permease family. The complex is composed of two ATP-binding proteins (GsiA), two transmembrane proteins (GsiC and GsiD) and a solute-binding protein (GsiB).

It localises to the cell inner membrane. Functionally, part of the ABC transporter complex GsiABCD involved in glutathione import. Probably responsible for the translocation of the substrate across the membrane. This Pectobacterium atrosepticum (strain SCRI 1043 / ATCC BAA-672) (Erwinia carotovora subsp. atroseptica) protein is Glutathione transport system permease protein GsiD.